The chain runs to 156 residues: Small ribosomal subunit protein uS7 (156 aa).

This sequence belongs to the universal ribosomal protein uS7 family. Part of the 30S ribosomal subunit. Contacts proteins S9 and S11.

One of the primary rRNA binding proteins, it binds directly to 16S rRNA where it nucleates assembly of the head domain of the 30S subunit. Is located at the subunit interface close to the decoding center, probably blocks exit of the E-site tRNA. This Photobacterium profundum (strain SS9) protein is Small ribosomal subunit protein uS7.